The following is an 828-amino-acid chain: DNA topoisomerase 3 (828 aa).

Residues 4 to 149 (RILNVAEKPS…KFEFYRAHFS (146 aa)) form the Toprim domain. Positions 167 to 617 (NEKDSIAVDT…STIEKYKQLY (451 aa)) constitute a Topo IA-type catalytic domain. Tyr-361 serves as the catalytic O-(5'-phospho-DNA)-tyrosine intermediate. Positions 763-828 (QQQQQQQQQQ…SDRNNNNFIF (66 aa)) are disordered.

It belongs to the type IA topoisomerase family.

The catalysed reaction is ATP-independent breakage of single-stranded DNA, followed by passage and rejoining.. Releases the supercoiling and torsional tension of DNA introduced during the DNA replication and transcription by transiently cleaving and rejoining one strand of the DNA duplex. Introduces a single-strand break via transesterification at a target site in duplex DNA. The scissile phosphodiester is attacked by the catalytic tyrosine of the enzyme, resulting in the formation of a DNA-(5'-phosphotyrosyl)-enzyme intermediate and the expulsion of a 3'-OH DNA strand. The free DNA strand than undergoes passage around the unbroken strand thus removing DNA supercoils. Finally, in the religation step, the DNA 3'-OH attacks the covalent intermediate to expel the active-site tyrosine and restore the DNA phosphodiester backbone. This is DNA topoisomerase 3 (top3) from Dictyostelium discoideum (Social amoeba).